Consider the following 342-residue polypeptide: MVKELATETNILAIESSCDETAAAIVSDGTRVRANIIASQIAVHRRFGGVVPEIASRHHMENIVPVVSEALATAGLAFSDVDAVAVTYGPGLVGALLVGVAYAKSLAYALGKPLIGVHHLLGHIYAGFLAYPGLPLPAVSLVVSGGHTNLVYLEDHTTRRILGSTRDDAAGEAFDKVARVLGLPYPGGPELEKLAREGNPRAIPFPRAWLEENSLDFSFSGLKSAVINYLHHARQVGQEVNRADVAASFQAAVAEVLVTKTLLAATSYRARSILLAGGVAANSVLRRELRSAGEQAGLPVFFPPRELCTDNAAMIGCAAYYQYLRRDFAPLSLNAIPDLPLN.

Fe cation is bound by residues His119 and His123. Residues Val142–Gly146, Asp175, Gly188, and Asn282 each bind substrate. Asp310 serves as a coordination point for Fe cation.

Belongs to the KAE1 / TsaD family. Fe(2+) serves as cofactor.

It localises to the cytoplasm. It catalyses the reaction L-threonylcarbamoyladenylate + adenosine(37) in tRNA = N(6)-L-threonylcarbamoyladenosine(37) in tRNA + AMP + H(+). Its function is as follows. Required for the formation of a threonylcarbamoyl group on adenosine at position 37 (t(6)A37) in tRNAs that read codons beginning with adenine. Is involved in the transfer of the threonylcarbamoyl moiety of threonylcarbamoyl-AMP (TC-AMP) to the N6 group of A37, together with TsaE and TsaB. TsaD likely plays a direct catalytic role in this reaction. The polypeptide is tRNA N6-adenosine threonylcarbamoyltransferase (Moorella thermoacetica (strain ATCC 39073 / JCM 9320)).